The chain runs to 604 residues: MPKISIHEALFFELLGERCDDDTLERRLRSAKAELECSSFSVREDKEGGSLSPGGEVCDPVQRTRGQASCVREGAFDARLLKIELNDTNRPDLWSTAGLARLLRVHAGGASRAAQYRAFLSDRCTVRDSYGRCVVVDARLQTIRPFIAGFVARGTGLSEVRLWDLIQTQERLASNFGRRRCTLSLGCYRAQDICWPLAYRAVLLAEVSFTPLGMSMPLSGEQILTQHPKGREYGHLLKDYSFVPLLVDARGEVLSLIPITNSASLGAVVTGDTELFIECSGTDMCAVLVAVNSLACDLSDMGMQIEPVQITYSFDTPWGRSVTTPFYFQEKREVAHEQIDRLLGMPLPVADITEAFARMDCAVQVKQGTYVVEPAAYRNDFLHAVDLIEEVMLGRTLDRFSPQVPCSFTVGRLSDLTLLTRKIKHLLVGFGYQEMIFHYLGSAREFCTRMRCTADDLIEIENPLTESYRFVRRSIIPCLLSAELKSAHALYPHRIFEIGKVAFCSPHGEHGTCTQQSLGFLNASQEASYNEVASLVSGLLYCLKLPYQVEEAQDPRFVLGRQASICVHGSRVGIFGEIHPQVLSNWDIRMPCFAGELDVGALLP.

Positions 327–402 (YFQEKREVAH…LGRTLDRFSP (76 aa)) constitute a B5 domain. Residues Asp380, Asp386, Glu389, and Glu390 each coordinate Mg(2+).

The protein belongs to the phenylalanyl-tRNA synthetase beta subunit family. Type 2 subfamily. Tetramer of two alpha and two beta subunits. It depends on Mg(2+) as a cofactor.

It is found in the cytoplasm. It catalyses the reaction tRNA(Phe) + L-phenylalanine + ATP = L-phenylalanyl-tRNA(Phe) + AMP + diphosphate + H(+). The chain is Phenylalanine--tRNA ligase beta subunit from Treponema pallidum subsp. pallidum (strain SS14).